Reading from the N-terminus, the 1070-residue chain is MASTISTNPAHAHFESFLQAQLCQDVLSSFQGLCGALGVEPGGGLSQYHKVKAQLNYWNAKSLWAKLDKRASQPVYQQGRACTGTKCLVVGAGPCGLRAAVELAMLGARVVLVEKRTKFSRHNVLHLWPFTIHDLRALGAKKFYGRFCTGSLDHISIRQLQLLLLKVALLLGVEIHWGITFTGLQPPPKKGSGWRAQLQPSPPAQLAKYEFDVLISAAGGKFVPEGFTVREMRGKLAIGITANFVNGRTVEETQVPEISGVARIYNQSFFQSLLKATGIDLENIVYYKDDTHYFVMTAKKQCLLRLGVLHKDWPDTERLLGSANVVPEALQRFARAAADFATHGKLGKLEFARDAHGRPDVSAFDFTSMMRAESSARVQERHGTRLLLGLVGDCLVEPFWPLGTGVARGFLAAFDAAWMVKRWAEGAGPLEVLAERESLYQLLSQTSPENMHRNVAQYGLDPATRYPNLNLRAVTPSQVRDLYDMEAKEPVQRMSDETDSGKAATGAVGSQEELLRWCQEQTAGYPGVHVTDLSSSWADGLALCALVHRLRPALLEPSELQGMGALEATSWALKMAEHELGITPVLSAQAMVAGSDPLGLIAYLSHFHSAFKSVPHNPGSVSQGSPGTASAVLFLGKLQRTLQRTRTQENGEDAGGKKPRLEVKAETPSTEEPPVPKPDEPMTPPSQQQDASAEDLCALCGQHLYILERLCADGRFFHRSCFRCHICEATLWPGGYRQHPGDGYLYCLQHLPQTGHEEDSSDRGPESQDLPMSSENNTPSGPATPVDLHQGTSPVPNPIQPTRRLIRLSSPERQRLSSLHLTPDPEMEPPPKPPRSCSTLAHQALEASFKGWGMPVQSPQVLEAMEMGEEERSSSSEEETEEEEDVPLDSDMEHFLRNLAENSGTMNNYPTWRRTLLRRAKEEEMKRFCKAQAIQRRLNEIEAALRELEARGTELELALRSQSSSPEKQKALWVEQLLQLVQKKNSLVAEEAELMITVQELNLEEKQWQLDQELRTYMNREETLKTAADRQAEDQVLRKLLDVVNQRDALIRLQEERRLSELASEPGVQG.

Residues 1–489 form a monooxygenase domain region; that stretch reads MASTISTNPA…RDLYDMEAKE (489 aa). FAD contacts are provided by residues cysteine 95, 114–116, 121–123, phenylalanine 181, tyrosine 293, and aspartate 393; these read EKR and RHN. Threonine 475 carries the phosphothreonine modification. The 105-residue stretch at 508-612 folds into the Calponin-homology (CH) domain; sequence VGSQEELLRW…YLSHFHSAFK (105 aa). Positions 643-690 are disordered; it reads QRTRTQENGEDAGGKKPRLEVKAETPSTEEPPVPKPDEPMTPPSQQQD. Basic and acidic residues predominate over residues 646 to 665; it reads RTQENGEDAGGKKPRLEVKA. A compositionally biased stretch (pro residues) spans 671–684; that stretch reads EEPPVPKPDEPMTP. The region spanning 695-757 is the LIM zinc-binding domain; sequence DLCALCGQHL…LQHLPQTGHE (63 aa). Positions 697, 700, 718, 721, 724, 727, 747, and 750 each coordinate Zn(2+). Disordered stretches follow at residues 754–838 and 865–887; these read TGHE…RSCS and MEMG…EDVP. Positions 755–766 are enriched in basic and acidic residues; that stretch reads GHEEDSSDRGPE. A compositionally biased stretch (polar residues) spans 770–781; the sequence is LPMSSENNTPSG. Phosphoserine is present on residues serine 793, serine 875, and serine 876. Residues 876–887 are compositionally biased toward acidic residues; sequence SEEETEEEEDVP. The interval 904–1070 is important for interaction with RAB8A; it reads GTMNNYPTWR…ELASEPGVQG (167 aa). The bMERB domain maps to 921 to 1070; it reads KEEEMKRFCK…ELASEPGVQG (150 aa). A coiled-coil region spans residues 928-1030; it reads FCKAQAIQRR…EETLKTAADR (103 aa). Serine 1060 is modified (phosphoserine).

This sequence belongs to the Mical family. Interacts with STK38 and STK38L. Associates with the SH3 domain of NEDD9. Interacts with VIM and PLXNA3. Interacts with RAB1B, RAB8A, RAB10, RAB13 and RAB15 (in their GTP-bound forms); binding to RAB1B is of low affinity compared to other Rab proteins; at least in case of RAB8A and RAB10 can bind 2 molecules of the Rab proteins simultaneously. Interacts with GRAF1/ARHGAP26, GRAF2/ARHGAP10, RAB8A, RAB8B and RAB10; may bind simultaneously to GRAFs and Rabs and connects GRAFs to Rabs. Does not interact with RAB1 and RAB11A. Requires FAD as cofactor.

It localises to the cytoplasm. Its subcellular location is the cytoskeleton. It is found in the endosome membrane. The protein resides in the midbody. It catalyses the reaction L-methionyl-[F-actin] + NADPH + O2 + H(+) = L-methionyl-(R)-S-oxide-[F-actin] + NADP(+) + H2O. It carries out the reaction NADPH + O2 + H(+) = H2O2 + NADP(+). In terms of biological role, monooxygenase that promotes depolymerization of F-actin by mediating oxidation of specific methionine residues on actin to form methionine-sulfoxide, resulting in actin filament disassembly and preventing repolymerization. In the absence of actin, it also functions as a NADPH oxidase producing H(2)O(2). Acts as a cytoskeletal regulator that connects NEDD9 to intermediate filaments. Also acts as a negative regulator of apoptosis via its interaction with STK38 and STK38L; acts by antagonizing STK38 and STK38L activation by MST1/STK4. Involved in regulation of lamina-specific connectivity in the nervous system such as the development of lamina-restricted hippocampal connections. Through redox regulation of the actin cytoskeleton controls the intracellular distribution of secretory vesicles containing L1/neurofascin/NgCAM family proteins in neurons, thereby regulating their cell surface levels. May act as Rab effector protein and play a role in vesicle trafficking. Promotes endosomal tubule extension by associating with RAB8 (RAB8A or RAB8B), RAB10 and GRAF (GRAF1/ARHGAP26 or GRAF2/ARHGAP10) on the endosomal membrane which may connect GRAFs to Rabs, thereby participating in neosynthesized Rab8-Rab10-Rab11-dependent protein export. The protein is [F-actin]-monooxygenase MICAL1 (MICAL1) of Bos taurus (Bovine).